The following is a 116-amino-acid chain: Protein Rev (116 aa).

2 positions are modified to phosphoserine; by host CK2: serine 5 and serine 8. The tract at residues 18–26 is homomultimerization; the sequence is LIKFLYQSN. The tract at residues 23–48 is disordered; the sequence is YQSNPPPNPEGTRQARRNRRRRWRER. The Nuclear localization signal and RNA-binding (RRE) signature appears at 34-50; it reads TRQARRNRRRRWRERQR. A compositionally biased stretch (basic residues) spans 36–48; that stretch reads QARRNRRRRWRER. Positions 73-84 match the Nuclear export signal and binding to XPO1 motif; that stretch reads LQLPPLERLNLD. Residues 90–116 are disordered; the sequence is GTSGTQGVGSPEILVESPAVLEPGTKE. 2 positions are modified to phosphoserine; by host: serine 92 and serine 99.

Belongs to the HIV-1 REV protein family. As to quaternary structure, homomultimer; when bound to the RRE. Multimeric assembly is essential for activity and may involve XPO1. Binds to human KPNB1, XPO1, TNPO1, RANBP5 and IPO7. Interacts with the viral Integrase. Interacts with human KHDRBS1. Interacts with human NAP1; this interaction decreases Rev multimerization and stimulates its activity. Interacts with human DEAD-box helicases DDX3 and DDX24; these interactions may serve for viral RNA export to the cytoplasm and packaging, respectively. Interacts with human PSIP1; this interaction may inhibit HIV-1 DNA integration by promoting dissociation of the Integrase-LEDGF/p75 complex. Asymmetrically arginine dimethylated at one site by host PRMT6. Methylation impairs the RNA-binding activity and export of viral RNA from the nucleus to the cytoplasm. Post-translationally, phosphorylated by protein kinase CK2. Presence of, and maybe binding to the N-terminus of the regulatory beta subunit of CK2 is necessary for CK2-mediated Rev's phosphorylation.

It is found in the host nucleus. The protein localises to the host nucleolus. It localises to the host cytoplasm. Functionally, escorts unspliced or incompletely spliced viral pre-mRNAs (late transcripts) out of the nucleus of infected cells. These pre-mRNAs carry a recognition sequence called Rev responsive element (RRE) located in the env gene, that is not present in fully spliced viral mRNAs (early transcripts). This function is essential since most viral proteins are translated from unspliced or partially spliced pre-mRNAs which cannot exit the nucleus by the pathway used by fully processed cellular mRNAs. Rev itself is translated from a fully spliced mRNA that readily exits the nucleus. Rev's nuclear localization signal (NLS) binds directly to KPNB1/Importin beta-1 without previous binding to KPNA1/Importin alpha-1. KPNB1 binds to the GDP bound form of RAN (Ran-GDP) and targets Rev to the nucleus. In the nucleus, the conversion from Ran-GDP to Ran-GTP dissociates Rev from KPNB1 and allows Rev's binding to the RRE in viral pre-mRNAs. Rev multimerization on the RRE via cooperative assembly exposes its nuclear export signal (NES) to the surface. Rev can then form a complex with XPO1/CRM1 and Ran-GTP, leading to nuclear export of the complex. Conversion from Ran-GTP to Ran-GDP mediates dissociation of the Rev/RRE/XPO1/RAN complex, so that Rev can return to the nucleus for a subsequent round of export. Beside KPNB1, also seems to interact with TNPO1/Transportin-1, RANBP5/IPO5 and IPO7/RANBP7 for nuclear import. The nucleoporin-like HRB/RIP is an essential cofactor that probably indirectly interacts with Rev to release HIV RNAs from the perinuclear region to the cytoplasm. The protein is Protein Rev of Human immunodeficiency virus type 1 group M subtype B (isolate OYI) (HIV-1).